The chain runs to 457 residues: tRNA-2-methylthio-N(6)-dimethylallyladenosine synthase (457 aa).

Positions 3-120 (KKVYVKTFGC…LPQMIDARRA (118 aa)) constitute an MTTase N-terminal domain. [4Fe-4S] cluster contacts are provided by Cys-12, Cys-49, Cys-83, Cys-157, Cys-161, and Cys-164. The 235-residue stretch at 143–377 (RVEGPSAFVS…QATIEENVAR (235 aa)) folds into the Radical SAM core domain. A TRAM domain is found at 380–447 (QSMVGKVERI…PHSLRGELVI (68 aa)).

This sequence belongs to the methylthiotransferase family. MiaB subfamily. In terms of assembly, monomer. [4Fe-4S] cluster serves as cofactor.

Its subcellular location is the cytoplasm. It catalyses the reaction N(6)-dimethylallyladenosine(37) in tRNA + (sulfur carrier)-SH + AH2 + 2 S-adenosyl-L-methionine = 2-methylsulfanyl-N(6)-dimethylallyladenosine(37) in tRNA + (sulfur carrier)-H + 5'-deoxyadenosine + L-methionine + A + S-adenosyl-L-homocysteine + 2 H(+). In terms of biological role, catalyzes the methylthiolation of N6-(dimethylallyl)adenosine (i(6)A), leading to the formation of 2-methylthio-N6-(dimethylallyl)adenosine (ms(2)i(6)A) at position 37 in tRNAs that read codons beginning with uridine. The protein is tRNA-2-methylthio-N(6)-dimethylallyladenosine synthase of Burkholderia cenocepacia (strain ATCC BAA-245 / DSM 16553 / LMG 16656 / NCTC 13227 / J2315 / CF5610) (Burkholderia cepacia (strain J2315)).